Reading from the N-terminus, the 492-residue chain is N-succinylglutamate 5-semialdehyde dehydrogenase (492 aa).

An NAD(+)-binding site is contributed by 220 to 225 (GSASTG). Active-site residues include glutamate 243 and cysteine 277.

This sequence belongs to the aldehyde dehydrogenase family. AstD subfamily.

It catalyses the reaction N-succinyl-L-glutamate 5-semialdehyde + NAD(+) + H2O = N-succinyl-L-glutamate + NADH + 2 H(+). The protein operates within amino-acid degradation; L-arginine degradation via AST pathway; L-glutamate and succinate from L-arginine: step 4/5. Its function is as follows. Catalyzes the NAD-dependent reduction of succinylglutamate semialdehyde into succinylglutamate. This Salmonella paratyphi C (strain RKS4594) protein is N-succinylglutamate 5-semialdehyde dehydrogenase.